The sequence spans 336 residues: Holliday junction branch migration complex subunit RuvB (336 aa).

Residues 4–184 (ADRLISAGTT…FGIVQRLEFY (181 aa)) are large ATPase domain (RuvB-L). ATP-binding positions include Ile23, Arg24, Gly65, Lys68, Thr69, Thr70, 131 to 133 (EDY), Arg174, Tyr184, and Arg221. Thr69 lines the Mg(2+) pocket. Residues 185 to 255 (QVPDLQYIVS…IAAQALDMLN (71 aa)) form a small ATPAse domain (RuvB-S) region. Residues 258-336 (AEGFDYMDRK…HFGITPPEMP (79 aa)) form a head domain (RuvB-H) region. Residues Arg294, Arg313, and Arg318 each contribute to the DNA site.

This sequence belongs to the RuvB family. As to quaternary structure, homohexamer. Forms an RuvA(8)-RuvB(12)-Holliday junction (HJ) complex. HJ DNA is sandwiched between 2 RuvA tetramers; dsDNA enters through RuvA and exits via RuvB. An RuvB hexamer assembles on each DNA strand where it exits the tetramer. Each RuvB hexamer is contacted by two RuvA subunits (via domain III) on 2 adjacent RuvB subunits; this complex drives branch migration. In the full resolvosome a probable DNA-RuvA(4)-RuvB(12)-RuvC(2) complex forms which resolves the HJ.

It is found in the cytoplasm. The catalysed reaction is ATP + H2O = ADP + phosphate + H(+). Its function is as follows. The RuvA-RuvB-RuvC complex processes Holliday junction (HJ) DNA during genetic recombination and DNA repair, while the RuvA-RuvB complex plays an important role in the rescue of blocked DNA replication forks via replication fork reversal (RFR). RuvA specifically binds to HJ cruciform DNA, conferring on it an open structure. The RuvB hexamer acts as an ATP-dependent pump, pulling dsDNA into and through the RuvAB complex. RuvB forms 2 homohexamers on either side of HJ DNA bound by 1 or 2 RuvA tetramers; 4 subunits per hexamer contact DNA at a time. Coordinated motions by a converter formed by DNA-disengaged RuvB subunits stimulates ATP hydrolysis and nucleotide exchange. Immobilization of the converter enables RuvB to convert the ATP-contained energy into a lever motion, pulling 2 nucleotides of DNA out of the RuvA tetramer per ATP hydrolyzed, thus driving DNA branch migration. The RuvB motors rotate together with the DNA substrate, which together with the progressing nucleotide cycle form the mechanistic basis for DNA recombination by continuous HJ branch migration. Branch migration allows RuvC to scan DNA until it finds its consensus sequence, where it cleaves and resolves cruciform DNA. This chain is Holliday junction branch migration complex subunit RuvB, found in Escherichia coli O17:K52:H18 (strain UMN026 / ExPEC).